Here is a 255-residue protein sequence, read N- to C-terminus: Small ribosomal subunit protein eS1 (255 aa).

Over residues 1 to 18 (MAVGKNKRLSKGKKGLKK) the composition is skewed to basic residues. The tract at residues 1–22 (MAVGKNKRLSKGKKGLKKRAQD) is disordered. Residue Ala-2 is modified to N-acetylalanine; partial.

The protein belongs to the eukaryotic ribosomal protein eS1 family. As to quaternary structure, component of the small ribosomal subunit. Mature ribosomes consist of a small (40S) and a large (60S) subunit. The 40S subunit contains about 33 different proteins and 1 molecule of RNA (18S). The 60S subunit contains about 49 different proteins and 3 molecules of RNA (25S, 5.8S and 5S).

The protein resides in the cytoplasm. The chain is Small ribosomal subunit protein eS1 from Uncinocarpus reesii (strain UAMH 1704).